The primary structure comprises 233 residues: DNA-directed RNA polymerase V subunit 5C (233 aa).

Belongs to the archaeal Rpo5/eukaryotic RPB5 RNA polymerase subunit family. Component of the RNA polymerase V complex. As to expression, expressed in flower buds and siliques.

It is found in the nucleus. Its function is as follows. DNA-dependent RNA polymerase catalyzes the transcription of DNA into RNA using the four ribonucleoside triphosphates as substrates. Component of RNA polymerase V involved in RNA-directed DNA methylation-dependent (RdDM) silencing of endogenous repeated sequences, including transposable elements. In Arabidopsis thaliana (Mouse-ear cress), this protein is DNA-directed RNA polymerase V subunit 5C (NRPE5C).